The chain runs to 386 residues: Cell division protein FtsZ (386 aa).

Residues 21-25 (GGGGN), 108-110 (GTG), glutamate 139, arginine 143, and asparagine 187 each bind GTP.

Belongs to the FtsZ family. Homodimer. Polymerizes to form a dynamic ring structure in a strictly GTP-dependent manner. Interacts directly with several other division proteins.

It localises to the cytoplasm. Essential cell division protein that forms a contractile ring structure (Z ring) at the future cell division site. The regulation of the ring assembly controls the timing and the location of cell division. One of the functions of the FtsZ ring is to recruit other cell division proteins to the septum to produce a new cell wall between the dividing cells. Binds GTP and shows GTPase activity. The protein is Cell division protein FtsZ of Coxiella burnetii (strain RSA 493 / Nine Mile phase I).